The following is a 393-amino-acid chain: 5-amino-6-(D-ribitylamino)uracil--L-tyrosine 4-hydroxyphenyl transferase (393 aa).

Positions 71 to 318 constitute a Radical SAM core domain; that stretch reads VTYVINRNIN…TAVSRIFLGN (248 aa). 3 residues coordinate [4Fe-4S] cluster: Cys85, Cys89, and Cys92.

This sequence belongs to the radical SAM superfamily. CofH family. In terms of assembly, consists of two subunits, CofG and CofH. [4Fe-4S] cluster serves as cofactor.

It carries out the reaction 5-amino-6-(D-ribitylamino)uracil + L-tyrosine + S-adenosyl-L-methionine = 5-amino-5-(4-hydroxybenzyl)-6-(D-ribitylimino)-5,6-dihydrouracil + 2-iminoacetate + 5'-deoxyadenosine + L-methionine + H(+). It functions in the pathway cofactor biosynthesis; coenzyme F0 biosynthesis. Catalyzes the radical-mediated synthesis of 5-amino-5-(4-hydroxybenzyl)-6-(D-ribitylimino)-5,6-dihydrouracil from 5-amino-6-(D-ribitylamino)uracil and L-tyrosine. This chain is 5-amino-6-(D-ribitylamino)uracil--L-tyrosine 4-hydroxyphenyl transferase, found in Trichodesmium erythraeum (strain IMS101).